The chain runs to 65 residues: Small ribosomal subunit protein bS21 (65 aa).

This sequence belongs to the bacterial ribosomal protein bS21 family.

The protein is Small ribosomal subunit protein bS21 of Chlorobaculum parvum (strain DSM 263 / NCIMB 8327) (Chlorobium vibrioforme subsp. thiosulfatophilum).